The chain runs to 536 residues: Glutamyl-tRNA(Gln) amidotransferase subunit B, mitochondrial (536 aa).

The protein belongs to the GatB/GatE family. GatB subfamily. As to quaternary structure, subunit of the heterotrimeric GatFAB amidotransferase (AdT) complex, composed of A, B and F subunits.

Its subcellular location is the mitochondrion. The catalysed reaction is L-glutamyl-tRNA(Gln) + L-glutamine + ATP + H2O = L-glutaminyl-tRNA(Gln) + L-glutamate + ADP + phosphate + H(+). Functionally, allows the formation of correctly charged Gln-tRNA(Gln) through the transamidation of misacylated Glu-tRNA(Gln) in the mitochondria. The reaction takes place in the presence of glutamine and ATP through an activated gamma-phospho-Glu-tRNA(Gln). This chain is Glutamyl-tRNA(Gln) amidotransferase subunit B, mitochondrial, found in Vanderwaltozyma polyspora (strain ATCC 22028 / DSM 70294 / BCRC 21397 / CBS 2163 / NBRC 10782 / NRRL Y-8283 / UCD 57-17) (Kluyveromyces polysporus).